The chain runs to 195 residues: Large ribosomal subunit protein uL5 (195 aa).

It belongs to the universal ribosomal protein uL5 family. Part of the 50S ribosomal subunit; part of the 5S rRNA/L5/L18/L25 subcomplex. Contacts the 5S rRNA and the P site tRNA. Forms a bridge to the 30S subunit in the 70S ribosome.

Functionally, this is one of the proteins that bind and probably mediate the attachment of the 5S RNA into the large ribosomal subunit, where it forms part of the central protuberance. In the 70S ribosome it contacts protein S13 of the 30S subunit (bridge B1b), connecting the 2 subunits; this bridge is implicated in subunit movement. Contacts the P site tRNA; the 5S rRNA and some of its associated proteins might help stabilize positioning of ribosome-bound tRNAs. The protein is Large ribosomal subunit protein uL5 of Chlorobium chlorochromatii (strain CaD3).